We begin with the raw amino-acid sequence, 67 residues long: Toxin Cex8 (67 aa).

Residue Ala1 is a signal peptide. The LCN-type CS-alpha/beta domain maps to 2–65 (KEGYLVNIYT…SYPYPEKSCG (64 aa)). 4 disulfides stabilise this stretch: Cys13–Cys64, Cys17–Cys40, Cys26–Cys45, and Cys30–Cys47. Cys64 is subject to Cysteine amide. Positions 65 to 67 (GRK) are excised as a propeptide.

Belongs to the long (4 C-C) scorpion toxin superfamily. Sodium channel inhibitor family. Beta subfamily. As to expression, expressed by the venom gland.

It is found in the secreted. Its function is as follows. Beta toxins bind voltage-independently at site-4 of sodium channels (Nav) and shift the voltage of activation toward more negative potentials thereby affecting sodium channel activation and promoting spontaneous and repetitive firing. The polypeptide is Toxin Cex8 (Centruroides exilicauda (Bark scorpion)).